Reading from the N-terminus, the 98-residue chain is Defensin-like protein 68 (98 aa).

Positions 1–19 are cleaved as a signal peptide; that stretch reads MGSSKLLVALTLVVMITIS. 4 cysteine pairs are disulfide-bonded: cysteine 38–cysteine 88, cysteine 42–cysteine 65, cysteine 51–cysteine 86, and cysteine 55–cysteine 87.

It belongs to the DEFL family.

The protein resides in the secreted. In Arabidopsis thaliana (Mouse-ear cress), this protein is Defensin-like protein 68.